Reading from the N-terminus, the 340-residue chain is tRNA N6-adenosine threonylcarbamoyltransferase (340 aa).

Fe cation is bound by residues His-111 and His-115. Substrate is bound by residues 134 to 138, Asp-167, Gly-180, and Asn-276; that span reads LVSGG. Fe cation is bound at residue Asp-304.

This sequence belongs to the KAE1 / TsaD family. It depends on Fe(2+) as a cofactor.

It localises to the cytoplasm. It catalyses the reaction L-threonylcarbamoyladenylate + adenosine(37) in tRNA = N(6)-L-threonylcarbamoyladenosine(37) in tRNA + AMP + H(+). In terms of biological role, required for the formation of a threonylcarbamoyl group on adenosine at position 37 (t(6)A37) in tRNAs that read codons beginning with adenine. Is involved in the transfer of the threonylcarbamoyl moiety of threonylcarbamoyl-AMP (TC-AMP) to the N6 group of A37, together with TsaE and TsaB. TsaD likely plays a direct catalytic role in this reaction. The sequence is that of tRNA N6-adenosine threonylcarbamoyltransferase from Helicobacter pylori (strain J99 / ATCC 700824) (Campylobacter pylori J99).